The primary structure comprises 116 residues: Bacterial microcompartment shell protein CutR (116 aa).

The BMC circularly permuted domain occupies 10–108 (RIIQESVPGK…LEYFKNSLGF (99 aa)).

This sequence belongs to the EutS/PduU family. Has been crystallized in 5 structures (all are mutated, 3 have an N-terminal His-tag), most are homohexameric with a central pore. In two the homohexamer lies flat with a beta-barrel on the flat face created by the protruding N termini of the six chains. In 2 others the hexamer is not flat but has a six-fold screw axis; the screw pitch is 33.8 or 41.9 Angstroms depending on the structure. Interacts with the BMC major shell protein.

The protein localises to the bacterial microcompartment. It participates in amine and polyamine metabolism; choline degradation. Its function is as follows. A minor shell protein of the choline degradation-specific bacterial microcompartment (BMC). Proteins such as this one with circularly permuted BMC domains may play a key role in conferring heterogeneity and flexibility in this BMC. The sequence is that of Bacterial microcompartment shell protein CutR from Streptococcus intermedius (strain ATCC 27335 / DSM 20573 / CCUG 32759 / CIP 103248 / JCM 12996 / LMG 17840 / NCTC 11324 / SK54 / 1877).